The primary structure comprises 147 residues: Large ribosomal subunit protein uL13 (147 aa).

This sequence belongs to the universal ribosomal protein uL13 family. As to quaternary structure, part of the 50S ribosomal subunit.

Its function is as follows. This protein is one of the early assembly proteins of the 50S ribosomal subunit, although it is not seen to bind rRNA by itself. It is important during the early stages of 50S assembly. The polypeptide is Large ribosomal subunit protein uL13 (Lactobacillus delbrueckii subsp. bulgaricus (strain ATCC 11842 / DSM 20081 / BCRC 10696 / JCM 1002 / NBRC 13953 / NCIMB 11778 / NCTC 12712 / WDCM 00102 / Lb 14)).